We begin with the raw amino-acid sequence, 162 residues long: Transcription elongation factor GreA (162 aa).

A coiled-coil region spans residues 50-75; sequence YHAAREEQGHLESRIRQLQELLRTAK.

It belongs to the GreA/GreB family.

Necessary for efficient RNA polymerase transcription elongation past template-encoded arresting sites. The arresting sites in DNA have the property of trapping a certain fraction of elongating RNA polymerases that pass through, resulting in locked ternary complexes. Cleavage of the nascent transcript by cleavage factors such as GreA or GreB allows the resumption of elongation from the new 3'terminus. GreA releases sequences of 2 to 3 nucleotides. The protein is Transcription elongation factor GreA of Saccharopolyspora erythraea (strain ATCC 11635 / DSM 40517 / JCM 4748 / NBRC 13426 / NCIMB 8594 / NRRL 2338).